The following is a 301-amino-acid chain: Ornithine carbamoyltransferase (301 aa).

Residues 47-50 (STRT), glutamine 74, arginine 98, and 125-128 (HPCQ) each bind carbamoyl phosphate. L-ornithine-binding positions include asparagine 156, aspartate 220, and 224 to 225 (SM). Residues 260–261 (CL) and arginine 288 contribute to the carbamoyl phosphate site.

It belongs to the aspartate/ornithine carbamoyltransferase superfamily. OTCase family.

The protein localises to the cytoplasm. It carries out the reaction carbamoyl phosphate + L-ornithine = L-citrulline + phosphate + H(+). The protein operates within amino-acid biosynthesis; L-arginine biosynthesis; L-arginine from L-ornithine and carbamoyl phosphate: step 1/3. In terms of biological role, reversibly catalyzes the transfer of the carbamoyl group from carbamoyl phosphate (CP) to the N(epsilon) atom of ornithine (ORN) to produce L-citrulline. This is Ornithine carbamoyltransferase from Methanobrevibacter smithii (strain ATCC 35061 / DSM 861 / OCM 144 / PS).